The sequence spans 1297 residues: DNA-directed RNA polymerase subunit beta'' (1297 aa).

The Zn(2+) site is built by C220, C293, C300, and C303. The span at 1278–1288 (RRRKQNTKTRK) shows a compositional bias: basic residues. A disordered region spans residues 1278 to 1297 (RRRKQNTKTRKNNLFSLNEK).

This sequence belongs to the RNA polymerase beta' chain family. RpoC2 subfamily. In terms of assembly, in plastids the minimal PEP RNA polymerase catalytic core is composed of four subunits: alpha, beta, beta', and beta''. When a (nuclear-encoded) sigma factor is associated with the core the holoenzyme is formed, which can initiate transcription. Requires Zn(2+) as cofactor.

It localises to the plastid. It is found in the chloroplast. It carries out the reaction RNA(n) + a ribonucleoside 5'-triphosphate = RNA(n+1) + diphosphate. Its function is as follows. DNA-dependent RNA polymerase catalyzes the transcription of DNA into RNA using the four ribonucleoside triphosphates as substrates. This Welwitschia mirabilis (Tree tumbo) protein is DNA-directed RNA polymerase subunit beta''.